Here is a 304-residue protein sequence, read N- to C-terminus: Granaticin polyketide synthase bifunctional cyclase/dehydratase (304 aa).

Its pathway is antifungal biosynthesis; monensin biosynthesis. Is needed for correct cyclization of the oligoketide leading to isochromanequinone formation. This Streptomyces virginiae (Streptomyces cinnamonensis) protein is Granaticin polyketide synthase bifunctional cyclase/dehydratase.